Here is a 204-residue protein sequence, read N- to C-terminus: ATP-dependent Clp protease proteolytic subunit (204 aa).

Serine 101 (nucleophile) is an active-site residue. Residue histidine 126 is part of the active site.

It belongs to the peptidase S14 family. In terms of assembly, component of the chloroplastic Clp protease core complex.

Its subcellular location is the plastid. The protein resides in the chloroplast stroma. It catalyses the reaction Hydrolysis of proteins to small peptides in the presence of ATP and magnesium. alpha-casein is the usual test substrate. In the absence of ATP, only oligopeptides shorter than five residues are hydrolyzed (such as succinyl-Leu-Tyr-|-NHMec, and Leu-Tyr-Leu-|-Tyr-Trp, in which cleavage of the -Tyr-|-Leu- and -Tyr-|-Trp bonds also occurs).. Functionally, cleaves peptides in various proteins in a process that requires ATP hydrolysis. Has a chymotrypsin-like activity. Plays a major role in the degradation of misfolded proteins. The polypeptide is ATP-dependent Clp protease proteolytic subunit (Phalaenopsis aphrodite subsp. formosana (Moth orchid)).